The following is a 63-amino-acid chain: Putative F-box protein At1g47702 (63 aa).

One can recognise an F-box domain in the interval 23-63; sequence KDRISDLPNRILGKIIVKLPLDEAVRIMALSKRWKSIWDDN.

The polypeptide is Putative F-box protein At1g47702 (Arabidopsis thaliana (Mouse-ear cress)).